The chain runs to 154 residues: Protein X (154 aa).

Positions 68–117 (PCALRFTSARRMETTVNAHRNLPKVLHKRTLGLSAMSTTDLEAHFKDCVF) are mitochondrial targeting sequence.

It belongs to the orthohepadnavirus protein X family. In terms of assembly, may form homodimer. May interact with host CEBPA, CFLAR, CREB1, DDB1, E4F1, HBXIP, HSPD1/HSP60, NFKBIA, POLR2E and SMAD4. Interacts with host SMC5-SMC6 complex and induces its degradation. Interacts with host TRPC4AP; leading to prevent ubiquitination of TRPC4AP. Interacts with host PLSCR1; this interaction promotes ubiquitination and degradation of HBx and impairs HBx-mediated cell proliferation. In terms of processing, a fraction may be phosphorylated in insect cells and HepG2 cells, a human hepatoblastoma cell line. Phosphorylated in vitro by host protein kinase C or mitogen-activated protein kinase. N-acetylated in insect cells.

It is found in the host cytoplasm. It localises to the host nucleus. The protein resides in the host mitochondrion. In terms of biological role, multifunctional protein that plays a role in silencing host antiviral defenses and promoting viral transcription. Does not seem to be essential for HBV infection. May be directly involved in development of cirrhosis and liver cancer (hepatocellular carcinoma). Most of cytosolic activities involve modulation of cytosolic calcium. The effect on apoptosis is controversial depending on the cell types in which the studies have been conducted. May induce apoptosis by localizing in mitochondria and causing loss of mitochondrial membrane potential. May also modulate apoptosis by binding host CFLAR, a key regulator of the death-inducing signaling complex (DISC). Promotes viral transcription by using the host E3 ubiquitin ligase DDB1 to target the SMC5-SMC6 complex to proteasomal degradation. This host complex would otherwise bind to viral episomal DNA, and prevents its transcription. Moderately stimulates transcription of many different viral and cellular transcription elements. Promoters and enhancers stimulated by HBx contain DNA binding sites for NF-kappa-B, AP-1, AP-2, c-EBP, ATF/CREB, or the calcium-activated factor NF-AT. The protein is Protein X of Hepatitis B virus genotype B2 (isolate Indonesia/pIDW420/1988) (HBV-B).